A 579-amino-acid chain; its full sequence is Glutamine--tRNA ligase (579 aa).

The 'HIGH' region motif lies at 41–51 (PEPNGYLHIGH). ATP contacts are provided by residues 42-44 (EPN) and 48-54 (HIGHAKA). L-glutamine is bound by residues aspartate 74 and tyrosine 218. Residues threonine 237, 285 to 286 (RL), and 293 to 295 (MSK) contribute to the ATP site. A 'KMSKS' region motif is present at residues 292-296 (VMSKR).

It belongs to the class-I aminoacyl-tRNA synthetase family. As to quaternary structure, monomer.

The protein localises to the cytoplasm. It catalyses the reaction tRNA(Gln) + L-glutamine + ATP = L-glutaminyl-tRNA(Gln) + AMP + diphosphate. The sequence is that of Glutamine--tRNA ligase from Xanthomonas campestris pv. campestris (strain 8004).